A 349-amino-acid polypeptide reads, in one-letter code: Anthranilate phosphoribosyltransferase (349 aa).

Residues G82, 85–86 (GD), 92–95 (NVSS), 110–118 (KHGNRAVSG), and S122 contribute to the 5-phospho-alpha-D-ribose 1-diphosphate site. Anthranilate is bound at residue G82. Residue S94 coordinates Mg(2+). N113 contacts anthranilate. Anthranilate is bound at residue R168. The Mg(2+) site is built by D227 and E228.

The protein belongs to the anthranilate phosphoribosyltransferase family. As to quaternary structure, homodimer. The cofactor is Mg(2+).

It carries out the reaction N-(5-phospho-beta-D-ribosyl)anthranilate + diphosphate = 5-phospho-alpha-D-ribose 1-diphosphate + anthranilate. It participates in amino-acid biosynthesis; L-tryptophan biosynthesis; L-tryptophan from chorismate: step 2/5. Its function is as follows. Catalyzes the transfer of the phosphoribosyl group of 5-phosphorylribose-1-pyrophosphate (PRPP) to anthranilate to yield N-(5'-phosphoribosyl)-anthranilate (PRA). In Pseudomonas aeruginosa (strain LESB58), this protein is Anthranilate phosphoribosyltransferase.